Reading from the N-terminus, the 22-residue chain is Antimicrobial peptide 4 (22 aa).

As to expression, expressed by the skin glands.

The protein resides in the secreted. In terms of biological role, has very strong antimicrobial activity against Gram-positive bacterium S.aureus and yeast C.albicans, and very weak activity against Gram-negative bacterium E.coli. Has strong hemolytic activity against human red blood cells. This is Antimicrobial peptide 4 from Xenopus tropicalis (Western clawed frog).